The chain runs to 487 residues: Meiotic recombination protein SPO11-4 (487 aa).

The tract at residues 1–56 (MDDSTDDDSYHPRKHYAYDRQVSSSRWRTSREYIRGPGPETHTTESAQDGQDPPAG) is disordered. Positions 119–252 (KSRVEARKTL…LGIIAAEKGI (134 aa)) constitute a Topo IIA-type catalytic domain. The O-(5'-phospho-DNA)-tyrosine intermediate role is filled by Y213. Mg(2+) contacts are provided by E301 and D353.

Belongs to the TOP6A family. In terms of assembly, homodimer. Interacts with TOP6B. Mg(2+) is required as a cofactor.

It localises to the nucleus. The catalysed reaction is ATP-dependent breakage, passage and rejoining of double-stranded DNA.. Its function is as follows. Required for meiotic recombination. Mediates DNA cleavage that forms the double-strand breaks (DSB) that initiate meiotic recombination. Possesses double-stranded DNA cleavage activity in vitro. The sequence is that of Meiotic recombination protein SPO11-4 (SPO11-4) from Oryza sativa subsp. japonica (Rice).